Reading from the N-terminus, the 340-residue chain is Alcohol dehydrogenase (340 aa).

Zn(2+) is bound by residues Cys37, His58, Cys89, Cys92, Cys95, Cys103, and Cys145.

It belongs to the zinc-containing alcohol dehydrogenase family. Zn(2+) is required as a cofactor.

The enzyme catalyses a primary alcohol + NAD(+) = an aldehyde + NADH + H(+). The catalysed reaction is a secondary alcohol + NAD(+) = a ketone + NADH + H(+). The sequence is that of Alcohol dehydrogenase (adh) from Staphylococcus epidermidis (strain ATCC 35984 / DSM 28319 / BCRC 17069 / CCUG 31568 / BM 3577 / RP62A).